A 27-amino-acid chain; its full sequence is KCRECGNTSPSCYFSGNCVNGKCVCPA.

Intrachain disulfides connect Cys-5/Cys-18 and Cys-12/Cys-25.

In terms of tissue distribution, expressed by the venom gland.

Its subcellular location is the secreted. In terms of biological role, blocker of voltage-gated potassium channels. Inhibits voltage-gated potassium channels Kv1.2/KCNA2 (Kd=0.96 nM) and Kv1.3/KCNA3 (Kd=1.3 nM). Does not inhibit Kv1.1/KCNA1, Kv1.5/KCNA5, Kv11.1/KCNH2/ERG1, KCa1.1/KCNMA1, KCa3.1/KCNN4, NaV1.5/SCN5A, NaV1.4/SCN4A or HV1/HVCN1. Strongly inhibits the expression of the activation markers interleukin-2 receptor and CD40 ligand/CD40LG in anti-CD3-activated CD4(+) TEM lymphocytes. The protein is Potassium channel toxin alpha-KTx 32.1 of Centruroides margaritatus (Central American bark Scorpion).